The chain runs to 884 residues: Translation initiation factor IF-2 (884 aa).

Composition is skewed to basic and acidic residues over residues 110–153 (AKAK…KEKA) and 193–234 (KQKE…DHHV). The disordered stretch occupies residues 110 to 291 (AKAKAEADAK…NRSTAPQSMA (182 aa)). Positions 255-268 (GRRARNKPTNKKRG) are enriched in basic residues. The 170-residue stretch at 384 to 553 (TRAPVVTIMG…LLQSEVLELK (170 aa)) folds into the tr-type G domain. The G1 stretch occupies residues 393–400 (GHVDHGKT). Residue 393-400 (GHVDHGKT) coordinates GTP. Positions 418-422 (GITQH) are G2. Positions 439 to 442 (DTPG) are G3. Residues 439-443 (DTPGH) and 493-496 (NKMD) each bind GTP. The G4 stretch occupies residues 493 to 496 (NKMD). Residues 529-531 (SAK) are G5.

The protein belongs to the TRAFAC class translation factor GTPase superfamily. Classic translation factor GTPase family. IF-2 subfamily.

It is found in the cytoplasm. Functionally, one of the essential components for the initiation of protein synthesis. Protects formylmethionyl-tRNA from spontaneous hydrolysis and promotes its binding to the 30S ribosomal subunits. Also involved in the hydrolysis of GTP during the formation of the 70S ribosomal complex. This chain is Translation initiation factor IF-2, found in Shewanella denitrificans (strain OS217 / ATCC BAA-1090 / DSM 15013).